The chain runs to 110 residues: Host transcription reprogramming factor 2 (110 aa).

The first 18 residues, Met-1–Ala-18, serve as a signal peptide directing secretion. The C2H2-type zinc-finger motif lies at Ile-68–His-96. Positions Lys-88–Thr-110 are disordered. Residues Pro-100 to Thr-110 show a composition bias toward basic and acidic residues.

It is found in the secreted. It localises to the host nucleus. Secreted effector that translocates into the nuclei of host cells to reprogram the expression of immunity-associated genes by binding to effector binding elements (EBEs) in rice. Binds the 5'-CCACCTCC-3' EBE of promoters from targeted rice genes and probably recruits a yet to be determined host repressor. Causes ambivalent immunity with increased susceptibility to the hemibiotrophic pathogens Magnaporthe oryzae and Xanthomonas oryzae pv. oryzae, but enhances resistance to Cochliobolus miyabeanus, a necrotrophic pathogen. The polypeptide is Host transcription reprogramming factor 2 (Pyricularia oryzae (strain 70-15 / ATCC MYA-4617 / FGSC 8958) (Rice blast fungus)).